Reading from the N-terminus, the 782-residue chain is E3 ubiquitin-protein ligase SopA (782 aa).

The disordered stretch occupies residues 136–171 (GVSVSANNRPTVSEGRTPPVSPSLSLQATSSPSSPA). Positions 157–171 (PSLSLQATSSPSSPA) are enriched in low complexity. The active-site Glycyl thioester intermediate is the Cys753.

Belongs to the SopA E3 ligase family. In terms of processing, ubiquitinated in the presence of host E1 ubiquitin-activating enzyme, E2 ubiquitin-conjugating enzyme and ubiquitin.

The protein localises to the secreted. It localises to the host cell. The enzyme catalyses S-ubiquitinyl-[E2 ubiquitin-conjugating enzyme]-L-cysteine + [acceptor protein]-L-lysine = [E2 ubiquitin-conjugating enzyme]-L-cysteine + N(6)-ubiquitinyl-[acceptor protein]-L-lysine.. In terms of biological role, effector proteins function to alter host cell physiology and promote bacterial survival in host tissues. This protein is an E3 ubiquitin ligase that interferes with host's ubiquitination pathway. For instance, prevents host innate immune response by ubiquitinating and thus sending to degradation host E3 ubiquitin ligases TRIM56 and TRIM65. The sequence is that of E3 ubiquitin-protein ligase SopA (sopA) from Salmonella typhimurium (strain D23580).